We begin with the raw amino-acid sequence, 769 residues long: Disintegrin and metalloproteinase domain-containing protein 11 (769 aa).

The N-terminal stretch at 1 to 23 (MRLLRRWAFAALLLSLLPTPGLG) is a signal peptide. Residues 24–225 (TQGPAGALRW…PNRPRLRRKR (202 aa)) constitute a propeptide that is removed on maturation. The segment at 40–78 (GGPGAPEVTEPSRLVRESSGGEVRKQQLDTRVRQEPPGG) is disordered. Residues 61–73 (EVRKQQLDTRVRQ) show a composition bias toward basic and acidic residues. Residues asparagine 96 and asparagine 163 are each glycosylated (N-linked (GlcNAc...) asparagine). Topologically, residues 226-734 (QVRRGHPTVH…ERYKGPSGTN (509 aa)) are extracellular. The region spanning 239–438 (KYVELIVIND…GGGSCLFNKP (200 aa)) is the Peptidase M12B domain. The required for localization to cerebellar cortex basket cell terminals. Also required for localization of KCNA1, KCNA2, DLG4 and ADAM22 to cerebellar cortex basket cell terminal perisomatic axons and pinceaux stretch occupies residues 332 to 769 (GRTFQSTSSG…NIRRGRSGGA (438 aa)). 4 disulfide bridges follow: cysteine 349–cysteine 433, cysteine 392–cysteine 417, cysteine 394–cysteine 401, and cysteine 503–cysteine 523. The region spanning 444 to 531 (PPECGNGFVE…QCPPNLHKLD (88 aa)) is the Disintegrin domain. N-linked (GlcNAc...) asparagine glycosylation is found at asparagine 605 and asparagine 673. Intrachain disulfides connect cysteine 677–cysteine 692, cysteine 686–cysteine 698, and cysteine 700–cysteine 709. In terms of domain architecture, EGF-like spans 677-709 (CPGSGERRICSHHGVCSNEGKCICQPDWTGKDC). Residues 735–755 (IIIGSIAGAVLVAAIVLGGTG) traverse the membrane as a helical segment. The Cytoplasmic portion of the chain corresponds to 756 to 769 (WGFKNIRRGRSGGA).

In terms of assembly, interacts with LGI1 and LGI4. Interacts with KCNA1/KV1.1, KCNA2/KV1.2, DLG4/PSD-95 and ADAM22. The precursor is cleaved by a furin endopeptidase. In terms of tissue distribution, expressed predominantly in brain. Slightly detected or not at all in other tissues.

The protein resides in the presynaptic cell membrane. It localises to the perikaryon. The protein localises to the cell projection. It is found in the axon. In terms of biological role, probable ligand for integrin in the brain. This is a non catalytic metalloprotease-like protein. Required for localization of the potassium channel subunit proteins KCNA1/KV1.1 and KCNA2/KV1.2 at cerebellar cortex basket cell distal terminals, is thereby involved in ephaptic inhibitory synchronization of Purkinje cell firing and response to stress. Plays a role in spatial learning and motor coordination. Involved in the nociceptive pain response to chemical-derived stimulation. The chain is Disintegrin and metalloproteinase domain-containing protein 11 (ADAM11) from Homo sapiens (Human).